The following is a 251-amino-acid chain: Adenosylcobinamide-GDP ribazoletransferase (251 aa).

7 consecutive transmembrane segments (helical) span residues 36 to 56 (LYPF…FVLS), 60 to 80 (VPIM…TGFL), 110 to 130 (VGAF…AGMF), 141 to 161 (ILIF…VSQE), 181 to 201 (EIIL…TLGI), 202 to 222 (NYLI…LKVK), and 231 to 251 (DVAG…LGII).

Belongs to the CobS family. The cofactor is Mg(2+).

The protein localises to the cell membrane. The enzyme catalyses alpha-ribazole + adenosylcob(III)inamide-GDP = adenosylcob(III)alamin + GMP + H(+). It carries out the reaction alpha-ribazole 5'-phosphate + adenosylcob(III)inamide-GDP = adenosylcob(III)alamin 5'-phosphate + GMP + H(+). Its pathway is cofactor biosynthesis; adenosylcobalamin biosynthesis; adenosylcobalamin from cob(II)yrinate a,c-diamide: step 7/7. Functionally, joins adenosylcobinamide-GDP and alpha-ribazole to generate adenosylcobalamin (Ado-cobalamin). Also synthesizes adenosylcobalamin 5'-phosphate from adenosylcobinamide-GDP and alpha-ribazole 5'-phosphate. The sequence is that of Adenosylcobinamide-GDP ribazoletransferase from Clostridium perfringens (strain ATCC 13124 / DSM 756 / JCM 1290 / NCIMB 6125 / NCTC 8237 / Type A).